We begin with the raw amino-acid sequence, 442 residues long: 5-methylthioadenosine/S-adenosylhomocysteine deaminase (442 aa).

Zn(2+) contacts are provided by His-70 and His-72. Positions 99 and 191 each coordinate substrate. His-218 lines the Zn(2+) pocket. The substrate site is built by Glu-221 and Asp-306. Asp-306 is a Zn(2+) binding site.

It belongs to the metallo-dependent hydrolases superfamily. MTA/SAH deaminase family. Zn(2+) serves as cofactor.

It carries out the reaction S-adenosyl-L-homocysteine + H2O + H(+) = S-inosyl-L-homocysteine + NH4(+). It catalyses the reaction S-methyl-5'-thioadenosine + H2O + H(+) = S-methyl-5'-thioinosine + NH4(+). Catalyzes the deamination of 5-methylthioadenosine and S-adenosyl-L-homocysteine into 5-methylthioinosine and S-inosyl-L-homocysteine, respectively. Is also able to deaminate adenosine. The polypeptide is 5-methylthioadenosine/S-adenosylhomocysteine deaminase (Nitratidesulfovibrio vulgaris (strain DP4) (Desulfovibrio vulgaris)).